Here is a 630-residue protein sequence, read N- to C-terminus: NUAK family SNF1-like kinase 2 (630 aa).

Methionine 1 bears the N-acetylmethionine mark. The Protein kinase domain maps to 57–307 (YEFLETLGKG…LEDVASHWWV (251 aa)). ATP-binding positions include 63-71 (LGKGTYGKV) and lysine 85. The active-site Proton acceptor is aspartate 179. Residue threonine 212 is modified to Phosphothreonine. 2 disordered regions span residues 361–504 (HVPG…RLHR) and 521–566 (GTAP…LDLP). Residues 464–476 (SGYYSSPEPSESG) are compositionally biased toward low complexity. A phosphoserine mark is found at serine 529, serine 550, serine 553, and serine 579.

It belongs to the protein kinase superfamily. CAMK Ser/Thr protein kinase family. SNF1 subfamily. It depends on Mg(2+) as a cofactor. In terms of processing, phosphorylated at Thr-212 by STK11/LKB1 in complex with STE20-related adapter-alpha (STRADA) pseudo kinase and CAB39. Autophosphorylation is also possible at Thr-212. Expressed in liver, skin, testis, uterus, ovary, adrenal gland and brain (at protein level). Expressed in kidney, heart, skin, spleen, lung, uterus, liver and the exocrine and endocrine compartments of the human pancreas. A kinase-inactive isoform also appears to be expressed in the skin, spleen, lung, uterus, liver and testis.

It carries out the reaction L-seryl-[protein] + ATP = O-phospho-L-seryl-[protein] + ADP + H(+). It catalyses the reaction L-threonyl-[protein] + ATP = O-phospho-L-threonyl-[protein] + ADP + H(+). Its activity is regulated as follows. Activated by phosphorylation on Thr-212 by STK11 in complex with STE20-related adapter-alpha (STRAD alpha) pseudo kinase and CAB39. Stress-activated kinase involved in tolerance to glucose starvation. Induces cell-cell detachment by increasing F-actin conversion to G-actin. Expression is induced by CD95 or TNF-alpha, via NF-kappa-B. Protects cells from CD95-mediated apoptosis and is required for the increased motility and invasiveness of CD95-activated tumor cells. Phosphorylates LATS1 and LATS2. Plays a key role in neural tube closure during embryonic development through LATS2 phosphorylation and regulation of the nuclear localization of YAP1 a critical downstream regulatory target in the Hippo signaling pathway. The protein is NUAK family SNF1-like kinase 2 of Rattus norvegicus (Rat).